We begin with the raw amino-acid sequence, 1354 residues long: Ubiquitin carboxyl-terminal hydrolase 47 (1354 aa).

Residues 114-133 (EQPQLASDESGTADSSGLDD) show a composition bias toward polar residues. Residues 114-139 (EQPQLASDESGTADSSGLDDSTQEKF) are disordered. One can recognise a USP domain in the interval 174–549 (VGLVNQAMTC…NAYMLMYRLK (376 aa)). Residue cysteine 183 is the Nucleophile of the active site. Residues 408 to 438 (DVEDEKSPQTDSCTDSGAENEGSCHSDQMSN) are disordered. Residues 416–438 (QTDSCTDSGAENEGSCHSDQMSN) are compositionally biased toward polar residues. The active-site Proton acceptor is histidine 488. A compositionally biased stretch (polar residues) spans 863–882 (LSLQQHQDGGNGDSSKSTEG). Disordered stretches follow at residues 863–1004 (LSLQ…ESGK) and 1314–1335 (LAKK…SPRK). Basic and acidic residues predominate over residues 920-930 (PEERSDSDVNN). Low complexity predominate over residues 933 to 949 (STSSVDSDILSSSHSSD). Over residues 977–986 (KANDGKKETW) the composition is skewed to basic and acidic residues. Positions 987 to 1000 (DTAEEDSGTDSEYD) are enriched in acidic residues.

The protein belongs to the peptidase C19 family. USP47 subfamily.

It is found in the cytoplasm. It carries out the reaction Thiol-dependent hydrolysis of ester, thioester, amide, peptide and isopeptide bonds formed by the C-terminal Gly of ubiquitin (a 76-residue protein attached to proteins as an intracellular targeting signal).. Its function is as follows. Ubiquitin-specific protease that specifically deubiquitinates monoubiquitinated DNA polymerase beta (polb), stabilizing polb thereby playing a role in base-excision repair (BER). This chain is Ubiquitin carboxyl-terminal hydrolase 47 (usp47), found in Xenopus tropicalis (Western clawed frog).